The primary structure comprises 71 residues: Heat-stable enterotoxin B (71 aa).

Positions 1 to 19 are cleaved as a signal peptide; the sequence is MKKIILALVLMLFSFCTLG. A propeptide spanning residues 20–52 is cleaved from the precursor; sequence QETASMHLDDTLSAPIAAEINRKACDTQTPSPS. Intrachain disulfides connect C59-C64, C60-C68, and C63-C71.

This sequence belongs to the heat-stable enterotoxin family.

The protein resides in the secreted. In terms of biological role, toxin which activates the particulate form of guanylate cyclase and increases cyclic GMP levels within the host intestinal epithelial cells. Could play an important role in pathogenesis. The protein is Heat-stable enterotoxin B (ystB) of Yersinia enterocolitica.